A 288-amino-acid chain; its full sequence is Polyamine aminopropyltransferase (288 aa).

Positions 9-238 (ETLHDQFGQY…GIMTFAWATD (230 aa)) constitute a PABS domain. S-methyl-5'-thioadenosine is bound at residue Gln-33. Residues His-64 and Asp-88 each contribute to the spermidine site. S-methyl-5'-thioadenosine is bound by residues Glu-108 and 140 to 141 (DG). Asp-158 serves as the catalytic Proton acceptor. Residue 158-161 (DCTD) participates in spermidine binding. Pro-165 is an S-methyl-5'-thioadenosine binding site.

This sequence belongs to the spermidine/spermine synthase family. As to quaternary structure, homodimer or homotetramer.

Its subcellular location is the cytoplasm. It carries out the reaction S-adenosyl 3-(methylsulfanyl)propylamine + putrescine = S-methyl-5'-thioadenosine + spermidine + H(+). It participates in amine and polyamine biosynthesis; spermidine biosynthesis; spermidine from putrescine: step 1/1. Catalyzes the irreversible transfer of a propylamine group from the amino donor S-adenosylmethioninamine (decarboxy-AdoMet) to putrescine (1,4-diaminobutane) to yield spermidine. The chain is Polyamine aminopropyltransferase from Shigella boydii serotype 4 (strain Sb227).